The sequence spans 364 residues: Melatonin receptor type 1B (364 aa).

The Extracellular segment spans residues 1–42; it reads MPENSSIPNCCEASGLAARPSWSGSAGARPPVTARAPWVAPM. Asn4 is a glycosylation site (N-linked (GlcNAc...) asparagine). A helical membrane pass occupies residues 43–63; the sequence is LSTVVVVTTAVDFVGNLLVIL. The Cytoplasmic segment spans residues 64-76; the sequence is SVLRNRKLRNAGN. The chain crosses the membrane as a helical span at residues 77–97; sequence LFVVSLALADLVIALYPYPLI. At 98–115 the chain is on the extracellular side; the sequence is LVAIIRDGWVLGEAHCKA. A disulfide bridge links Cys113 with Cys190. A helical transmembrane segment spans residues 116–136; the sequence is SAFVMGLSVIGSVFNITAIAI. Residues 137–155 lie on the Cytoplasmic side of the membrane; it reads NRYCCICHSTTYHRVCSHW. The helical transmembrane segment at 156–176 threads the bilayer; sequence YTPIYISLVWLLTLVALVPNF. Topologically, residues 177–200 are extracellular; it reads FVGSLEYDPRIYSCTFIQTASTQY. The helical transmembrane segment at 201-221 threads the bilayer; that stretch reads TAAVVAIHFLLPMAVVSFCYL. The Cytoplasmic segment spans residues 222-253; the sequence is RIWVLVLQARRKAKATRKLRLRPSDLRSFLTM. The helical transmembrane segment at 254–274 threads the bilayer; sequence FAVFVVFAICWAPLNCIGLAV. The Extracellular segment spans residues 275–287; sequence AINPEAMALQVPE. Residues 288 to 308 traverse the membrane as a helical segment; sequence GLFVTSYFLAYFNSCLNAIVY. Topologically, residues 309 to 364 are cytoplasmic; that stretch reads GLLNQNFRREYKRILLAIWNTRRCIQHASKHCLTEERQGPTPPAARATVPVKEGAL. Residues 343 to 364 form a disordered region; sequence EERQGPTPPAARATVPVKEGAL. Residues 352 to 364 show a composition bias toward low complexity; it reads AARATVPVKEGAL.

Belongs to the G-protein coupled receptor 1 family.

The protein resides in the cell membrane. Its function is as follows. High affinity receptor for melatonin. The activity of this receptor is mediated by pertussis toxin sensitive G proteins that inhibits adenylate cyclase activity. This chain is Melatonin receptor type 1B (Mtnr1b), found in Mus musculus (Mouse).